Here is a 323-residue protein sequence, read N- to C-terminus: Germination protease (323 aa).

Positions Met-1–Asp-6 are excised as a propeptide.

Belongs to the peptidase A25 family. Homotetramer. Post-translationally, autoproteolytically processed. The inactive tetrameric zymogen termed p46 autoprocesses to a smaller form termed p41, which is active only during spore germination.

It carries out the reaction Endopeptidase action with P4 Glu or Asp, P1 preferably Glu &gt; Asp, P1' hydrophobic and P2' Ala.. In terms of biological role, initiates the rapid degradation of small, acid-soluble proteins during spore germination. This chain is Germination protease, found in Clostridium tetani (strain Massachusetts / E88).